We begin with the raw amino-acid sequence, 516 residues long: 2,3-bisphosphoglycerate-independent phosphoglycerate mutase (516 aa).

The Mn(2+) site is built by Asp15 and Ser65. Catalysis depends on Ser65, which acts as the Phosphoserine intermediate. Substrate-binding positions include His126, 156–157 (RD), Arg188, Arg194, 263–266 (RADR), and Lys336. Mn(2+) contacts are provided by Asp403, His407, Asp444, His445, and His463.

The protein belongs to the BPG-independent phosphoglycerate mutase family. In terms of assembly, monomer. Mn(2+) serves as cofactor.

It carries out the reaction (2R)-2-phosphoglycerate = (2R)-3-phosphoglycerate. The protein operates within carbohydrate degradation; glycolysis; pyruvate from D-glyceraldehyde 3-phosphate: step 3/5. Catalyzes the interconversion of 2-phosphoglycerate and 3-phosphoglycerate. This is 2,3-bisphosphoglycerate-independent phosphoglycerate mutase from Francisella tularensis subsp. holarctica (strain OSU18).